Here is a 57-residue protein sequence, read N- to C-terminus: UPF0391 membrane protein XOO1885 (57 aa).

2 consecutive transmembrane segments (helical) span residues 4–24 (WAII…GGMA) and 33–53 (FLFW…MTIA).

It belongs to the UPF0391 family.

It is found in the cell membrane. The sequence is that of UPF0391 membrane protein XOO1885 from Xanthomonas oryzae pv. oryzae (strain KACC10331 / KXO85).